A 139-amino-acid chain; its full sequence is ATP synthase epsilon chain (139 aa).

This sequence belongs to the ATPase epsilon chain family. As to quaternary structure, F-type ATPases have 2 components, CF(1) - the catalytic core - and CF(0) - the membrane proton channel. CF(1) has five subunits: alpha(3), beta(3), gamma(1), delta(1), epsilon(1). CF(0) has three main subunits: a, b and c.

The protein localises to the cell inner membrane. Produces ATP from ADP in the presence of a proton gradient across the membrane. This chain is ATP synthase epsilon chain, found in Erwinia tasmaniensis (strain DSM 17950 / CFBP 7177 / CIP 109463 / NCPPB 4357 / Et1/99).